Consider the following 134-residue polypeptide: MSDLTKKDDEYWRDKLDAEQFRICREKGTERPFTGEYCDSKEPGTYLCRCCAEPLFESATKYDSGSGWPSFFQPIKGDAVGEIKDTSHGMVRVEVVCHNCGCHLGHVFPDGPKPTGLRYCINSASIQLQKEGAE.

Positions 9–131 constitute a MsrB domain; that stretch reads DEYWRDKLDA…NSASIQLQKE (123 aa). 4 residues coordinate Zn(2+): Cys48, Cys51, Cys97, and Cys100. Residue Cys120 is the Nucleophile of the active site.

This sequence belongs to the MsrB Met sulfoxide reductase family. Zn(2+) serves as cofactor.

The catalysed reaction is L-methionyl-[protein] + [thioredoxin]-disulfide + H2O = L-methionyl-(R)-S-oxide-[protein] + [thioredoxin]-dithiol. This chain is Peptide methionine sulfoxide reductase MsrB, found in Saccharophagus degradans (strain 2-40 / ATCC 43961 / DSM 17024).